A 1463-amino-acid chain; its full sequence is Alpha-agarase (1463 aa).

Positions 1–27 (MITSSKKIVSAMLSTSLWIGVASAAYA) are cleaved as a signal peptide. Positions 28–684 (ETTNVEAEGY…PSTLSESIFT (657 aa)) are excised as a propeptide. Disordered stretches follow at residues 166 to 191 (VTPE…PGTP) and 512 to 549 (TDDI…PQPG). A compositionally biased stretch (polar residues) spans 518–536 (CANTPSGETANATGCSSSQ). Residues 534–677 (SSQEGGGTDP…GGTNFVHPST (144 aa)) enclose the PA14 domain. In terms of domain architecture, CBM6 spans 701–832 (IIVELESFVF…QWSGDRVRFT (132 aa)).

The protein belongs to the glycosyl hydrolase 96 family. Monomer. Ca(2+) is required as a cofactor.

It carries out the reaction Endohydrolysis of 1,3-alpha-L-galactosidic linkages in agarose, yielding agarotetraose as the major product.. Its function is as follows. Alpha-agarase. Hydrolyzes agarose, agarohexaose, neoagarohexaose and porphyran. Hydrolysis of porphyran by this enzyme improves its antioxidant activity. Does not hydrolyze kappa-carrageenan, iota-carrageenen or lambda-carrageenan. The chain is Alpha-agarase from Thalassotalea agarivorans (Thalassomonas agarivorans).